The primary structure comprises 456 residues: MTQSENVAAAGGAKTEPKVRPAKALQGVKGMNDMLPADAPLWEHFENAARAMLRAYGYQQIRTPIVEHTQLFVRGIGEVTDIVEKEMYSFTDSLNGEQLTLRPEGTAAAVRATIEHNLLYDGPKRLWYTGPMFRHERPQRGRYRQFHQLGAEALGFAGPDVDAEIILMCQRLWDDLGLVGVRLELNSLGQAHERAAHREQLIKYLEGFQDILDDDSKRRLYTNPLRVLDTKNPALQEMAANAPKLIDFLGEESLAHFEGVQRLLKANNIPFKINPRLVRGLDYYNLTVFEWITDKLGAQGTIAGGGRYDPLIAQMGGKPAPACGWAMGIERIIELIREEGVVPDAAGCDVYLVHQGEAAAQQAMIAAERLRDAGLDVVLHASPDGKGGSFKSQMKRADTSGAAYAVIIGDDEVAAGVVQVKELRQREQAEGGGQQATVPAEGLVDYLIDAMVGASE.

A disordered region spans residues 1 to 20 (MTQSENVAAAGGAKTEPKVR).

The protein belongs to the class-II aminoacyl-tRNA synthetase family. In terms of assembly, homodimer.

The protein localises to the cytoplasm. The catalysed reaction is tRNA(His) + L-histidine + ATP = L-histidyl-tRNA(His) + AMP + diphosphate + H(+). The polypeptide is Histidine--tRNA ligase (Cupriavidus necator (strain ATCC 17699 / DSM 428 / KCTC 22496 / NCIMB 10442 / H16 / Stanier 337) (Ralstonia eutropha)).